Here is a 172-residue protein sequence, read N- to C-terminus: DNA-directed RNA polymerase II subunit rpb7 (172 aa).

It belongs to the eukaryotic RPB7/RPC8 RNA polymerase subunit family. In terms of assembly, component of the RNA polymerase II (Pol II) complex consisting of 12 subunits. RPB4 and RPB7 form a subcomplex that protrudes from the 10-subunit Pol II core complex.

The protein resides in the nucleus. In terms of biological role, DNA-dependent RNA polymerase catalyzes the transcription of DNA into RNA using the four ribonucleoside triphosphates as substrates. Component of RNA polymerase II which synthesizes mRNA precursors and many functional non-coding RNAs. Pol II is the central component of the basal RNA polymerase II transcription machinery. It is composed of mobile elements that move relative to each other. RPB7 is part of a subcomplex with RPB4 that binds to a pocket formed by RPB1, RPB2 and RPB6 at the base of the clamp element. The RPB4-RPB7 subcomplex seems to lock the clamp via RPB7 in the closed conformation thus preventing double-stranded DNA to enter the active site cleft. The RPB4-RPB7 subcomplex binds single-stranded DNA and RNA. The protein is DNA-directed RNA polymerase II subunit rpb7 (polr2g) of Dictyostelium discoideum (Social amoeba).